A 259-amino-acid chain; its full sequence is Putative cysteine-rich repeat secretory protein 25 (259 aa).

A signal peptide spans 1–31; the sequence is MSSSFLSRPLVSVYVFAMVTMQLLFMQSVLS. 2 consecutive Gnk2-homologous domains span residues 37–138 and 144–256; these read AYLN…SIYT and YRHI…LYPF.

Belongs to the cysteine-rich repeat secretory protein family.

The protein localises to the secreted. In Arabidopsis thaliana (Mouse-ear cress), this protein is Putative cysteine-rich repeat secretory protein 25 (CRRSP25).